A 411-amino-acid chain; its full sequence is Serine hydroxymethyltransferase (411 aa).

(6S)-5,6,7,8-tetrahydrofolate is bound by residues L117 and 121-123 (GHL). K226 is modified (N6-(pyridoxal phosphate)lysine).

It belongs to the SHMT family. Homodimer. Requires pyridoxal 5'-phosphate as cofactor.

The protein resides in the cytoplasm. The catalysed reaction is (6R)-5,10-methylene-5,6,7,8-tetrahydrofolate + glycine + H2O = (6S)-5,6,7,8-tetrahydrofolate + L-serine. It participates in one-carbon metabolism; tetrahydrofolate interconversion. Its pathway is amino-acid biosynthesis; glycine biosynthesis; glycine from L-serine: step 1/1. Catalyzes the reversible interconversion of serine and glycine with tetrahydrofolate (THF) serving as the one-carbon carrier. This reaction serves as the major source of one-carbon groups required for the biosynthesis of purines, thymidylate, methionine, and other important biomolecules. Also exhibits THF-independent aldolase activity toward beta-hydroxyamino acids, producing glycine and aldehydes, via a retro-aldol mechanism. This is Serine hydroxymethyltransferase from Syntrophobacter fumaroxidans (strain DSM 10017 / MPOB).